The primary structure comprises 273 residues: Large ribosomal subunit protein uL2cz/uL2cy (273 aa).

Disordered regions lie at residues 1 to 20 and 225 to 273; these read MAKH…TIDR and PVDH…RRRK.

The protein belongs to the universal ribosomal protein uL2 family. As to quaternary structure, part of the 50S ribosomal subunit.

It localises to the plastid. The protein localises to the chloroplast. The chain is Large ribosomal subunit protein uL2cz/uL2cy (rpl2-A) from Oryza nivara (Indian wild rice).